The primary structure comprises 61 residues: Large ribosomal subunit protein uL30 (61 aa).

The protein belongs to the universal ribosomal protein uL30 family. In terms of assembly, part of the 50S ribosomal subunit.

The protein is Large ribosomal subunit protein uL30 of Caulobacter vibrioides (strain ATCC 19089 / CIP 103742 / CB 15) (Caulobacter crescentus).